Reading from the N-terminus, the 860-residue chain is DNA mismatch repair protein MutS (860 aa).

607–614 (GPNMSGKS) lines the ATP pocket.

It belongs to the DNA mismatch repair MutS family.

Functionally, this protein is involved in the repair of mismatches in DNA. It is possible that it carries out the mismatch recognition step. This protein has a weak ATPase activity. The polypeptide is DNA mismatch repair protein MutS (Listeria welshimeri serovar 6b (strain ATCC 35897 / DSM 20650 / CCUG 15529 / CIP 8149 / NCTC 11857 / SLCC 5334 / V8)).